The following is a 465-amino-acid chain: Innexin-11 (465 aa).

The next 4 helical transmembrane spans lie at 29 to 49 (LMTPNILLAFSVLISFKQFGG), 105 to 125 (QWVPFFLLLQAAFFRAPSYLW), 195 to 215 (SGFISWIYLFTKVLYFLNVFA), and 286 to 306 (IFVLLWFWYVILLLSSTVSLV). Positions 433–465 (ISTSLMPDKDDIESSSTSSEEDQKRVSNVITNI) are disordered.

Belongs to the pannexin family.

Its subcellular location is the cell membrane. The protein localises to the cell junction. It is found in the gap junction. Its function is as follows. Structural component of the gap junctions. The polypeptide is Innexin-11 (inx-11) (Caenorhabditis elegans).